Here is a 367-residue protein sequence, read N- to C-terminus: MEAERLNSLESLLADLTTRATELRRYLDFDVKSEKLDQVNGELEDPDVWNDQKRAQDLGKEKKSLEAIVHTLIKIDSELNDARDLFEMAREEKDEDTIVAIENDAQELLKLVEGMEFRRMFSNPMDANNCFIDIQAGAGGTEAQDWASMLLRQYLRYCERKGFKVEILEQSDGEVAGIKTATLKVEGDYAYGFLRTETGVHRLVRKSPFDSANGRHTSFSSLFVYPEVDDSIEIDINPADVRIDTYRASGAGGQHINKTDSAVRLTHGPSGIVVQCQNDRSQHRNKAEAWDMLKAKLFELEMRNRMSEQQKLEDSKTDVGWGHQIRSYVLDQSRIKDLRTNFETGNTKAVLDGDLDDFIAASLKQGV.

Gln254 bears the N5-methylglutamine mark.

Belongs to the prokaryotic/mitochondrial release factor family. Methylated by PrmC. Methylation increases the termination efficiency of RF2.

The protein localises to the cytoplasm. Functionally, peptide chain release factor 2 directs the termination of translation in response to the peptide chain termination codons UGA and UAA. This is Peptide chain release factor 2 from Janthinobacterium sp. (strain Marseille) (Minibacterium massiliensis).